The primary structure comprises 539 residues: Acrosin-binding protein (539 aa).

Positions 1–25 (MRQLAAGSLLSLLKVLLLPLAPAPA) are cleaved as a signal peptide. The interval 26–106 (QDANSASTPG…ASWFESFCQF (81 aa)) is pro-ACR binding. Positions 26 to 269 (QDANSASTPG…NPFSFTPRVR (244 aa)) are cleaved as a propeptide — removed in active form. The segment at 186-259 (LGGQEQGQEH…PKFQSEFVSS (74 aa)) is disordered. Residues 192-211 (GQEHKQEHKQEQGQEHKQDE) are compositionally biased toward basic and acidic residues. Over residues 212 to 238 (GQEQEEQEEEQEEEGKQEEGQGTEESL) the composition is skewed to acidic residues. The pro-ACR binding stretch occupies residues 315–423 (LPHVDALLVL…TQIGTLKSGR (109 aa)).

As to quaternary structure, binds specifically to the 55- and 53-kDa proacrosins and the 49-kDa acrosin intermediate, but is not capable of binding 43-kDa acrosin intermediate and 32-kDa mature acrosin. The N-terminus is blocked. Post-translationally, synthesized as a 60-kDa precursor, the 35-kDa mature form is post-translationally produced by the removal of the N-terminal half of the precursor during sperm maturation in the testis and/or epididymis. In terms of processing, phosphorylated on Tyr residues in capacitated sperm. As to expression, specifically expressed in testis.

Its subcellular location is the secreted. It localises to the cytoplasmic vesicle. It is found in the secretory vesicle. The protein resides in the acrosome. Acrosomal protein that maintains proacrosin (pro-ACR) as an enzymatically inactive zymogen in the acrosome. Involved also in the acrosome formation. The sequence is that of Acrosin-binding protein from Sus scrofa (Pig).